The chain runs to 95 residues: Small ribosomal subunit protein bS6 (95 aa).

Belongs to the bacterial ribosomal protein bS6 family.

Functionally, binds together with bS18 to 16S ribosomal RNA. The chain is Small ribosomal subunit protein bS6 from Clostridium perfringens (strain ATCC 13124 / DSM 756 / JCM 1290 / NCIMB 6125 / NCTC 8237 / Type A).